The following is a 572-amino-acid chain: MEPRAPRRRHTHQRGYLLTRDPHLNKDLAFTLEERQQLNIHGLLPPCIISQELQVLRIIKNFERLNSDFDRYLLLMDLQDRNEKLFYSVLMSDVEKFMPIVYTPTVGLACQQYSLAFRKPRGLFISIHDKGHIASVLNAWPEDVVKAIVVTDGERILGLGDLGCNGMGIPVGKLALYTACGGVNPQQCLPITLDVGTENEELLKDPLYIGLRHRRVRGPEYDAFLDEFMEAASSKYGMNCLIQFEDFANRNAFRLLNKYRNKYCTFNDDIQGTASVAVAGLLAALRITKNKLSDQTVLFQGAGEAALGIAHLVVMAMEKEGLSKENARKKIWLVDSKGLIVKGRASLTEEKEVFAHEHEEMKNLEAIVQKIKPTALIGVAAIGGAFTEQILKDMAAFNERPIIFALSNPTSKAECSAEQCYKVTKGRAIFASGSPFDPVTLPDGRTLFPGQGNNSYVFPGVALGVVACGLRHIDDKVFLTTAEVISQQVSDKHLQEGRLYPPLNTIRGVSLKIAVKIVQDAYKEKMATVYPEPQNKEEFVSSQMYSTNYDQILPDCYPWPAEVQKIQTKVNQ.

Residue M1 is modified to N-acetylmethionine. Y102 functions as the Proton donor in the catalytic mechanism. An NADP(+)-binding site is contributed by R155. Residue K173 is the Proton acceptor of the active site. Residues E245, D246, and D269 each contribute to the a divalent metal cation site. NADP(+)-binding positions include D269 and 301–318 (GAGE…MAME). At S336 the chain carries Phosphoserine.

Belongs to the malic enzymes family. As to quaternary structure, homotetramer. It depends on Mg(2+) as a cofactor. The cofactor is Mn(2+).

Its subcellular location is the cytoplasm. The catalysed reaction is (S)-malate + NADP(+) = pyruvate + CO2 + NADPH. The enzyme catalyses oxaloacetate + H(+) = pyruvate + CO2. Functionally, catalyzes the oxidative decarboxylation of (S)-malate in the presence of NADP(+) and divalent metal ions, and decarboxylation of oxaloacetate. The protein is NADP-dependent malic enzyme (Me1) of Mus musculus (Mouse).